Consider the following 558-residue polypeptide: Dihydroxy-acid dehydratase (558 aa).

A Mg(2+)-binding site is contributed by aspartate 78. Cysteine 119 contacts [2Fe-2S] cluster. Residues aspartate 120 and lysine 121 each coordinate Mg(2+). Position 121 is an N6-carboxylysine (lysine 121). Residue cysteine 192 coordinates [2Fe-2S] cluster. Glutamate 446 provides a ligand contact to Mg(2+). Serine 472 acts as the Proton acceptor in catalysis.

Belongs to the IlvD/Edd family. As to quaternary structure, homodimer. [2Fe-2S] cluster serves as cofactor. Mg(2+) is required as a cofactor.

The catalysed reaction is (2R)-2,3-dihydroxy-3-methylbutanoate = 3-methyl-2-oxobutanoate + H2O. The enzyme catalyses (2R,3R)-2,3-dihydroxy-3-methylpentanoate = (S)-3-methyl-2-oxopentanoate + H2O. It participates in amino-acid biosynthesis; L-isoleucine biosynthesis; L-isoleucine from 2-oxobutanoate: step 3/4. The protein operates within amino-acid biosynthesis; L-valine biosynthesis; L-valine from pyruvate: step 3/4. Functions in the biosynthesis of branched-chain amino acids. Catalyzes the dehydration of (2R,3R)-2,3-dihydroxy-3-methylpentanoate (2,3-dihydroxy-3-methylvalerate) into 2-oxo-3-methylpentanoate (2-oxo-3-methylvalerate) and of (2R)-2,3-dihydroxy-3-methylbutanoate (2,3-dihydroxyisovalerate) into 2-oxo-3-methylbutanoate (2-oxoisovalerate), the penultimate precursor to L-isoleucine and L-valine, respectively. This Campylobacter jejuni subsp. doylei (strain ATCC BAA-1458 / RM4099 / 269.97) protein is Dihydroxy-acid dehydratase.